A 481-amino-acid polypeptide reads, in one-letter code: Aspartyl/glutamyl-tRNA(Asn/Gln) amidotransferase subunit B (481 aa).

It belongs to the GatB/GatE family. GatB subfamily. In terms of assembly, heterotrimer of A, B and C subunits.

It catalyses the reaction L-glutamyl-tRNA(Gln) + L-glutamine + ATP + H2O = L-glutaminyl-tRNA(Gln) + L-glutamate + ADP + phosphate + H(+). The enzyme catalyses L-aspartyl-tRNA(Asn) + L-glutamine + ATP + H2O = L-asparaginyl-tRNA(Asn) + L-glutamate + ADP + phosphate + 2 H(+). Allows the formation of correctly charged Asn-tRNA(Asn) or Gln-tRNA(Gln) through the transamidation of misacylated Asp-tRNA(Asn) or Glu-tRNA(Gln) in organisms which lack either or both of asparaginyl-tRNA or glutaminyl-tRNA synthetases. The reaction takes place in the presence of glutamine and ATP through an activated phospho-Asp-tRNA(Asn) or phospho-Glu-tRNA(Gln). This chain is Aspartyl/glutamyl-tRNA(Asn/Gln) amidotransferase subunit B, found in Pseudomonas fluorescens (strain Pf0-1).